The following is an 89-amino-acid chain: MAAQIPESDQIKQFKEFLGTYNKLTETCFLDCVKDFTTREVKPEETTCSEHCLQKYLKMTQRISMRFQEYHIQQNEALAAKAGLLGQPR.

Ala-2 carries the post-translational modification N-acetylalanine. The Twin CX3C motif motif lies at 28–52 (CFLDCVKDFTTREVKPEETTCSEHC). 2 cysteine pairs are disulfide-bonded: Cys-28/Cys-52 and Cys-32/Cys-48.

This sequence belongs to the small Tim family. In terms of assembly, heterohexamer; composed of 3 copies of TIMM9 and 3 copies of TIMM10/TIM10A, named soluble 70 kDa complex. The complex forms a 6-bladed alpha-propeller structure and associates with the TIMM22 component of the TIM22 complex. Interacts with multi-pass transmembrane proteins in transit. Also forms a complex composed of TIMM9, TIMM10/TIM10A and FXC1/TIM10B. As to expression, ubiquitous, with highest expression in heart, kidney, liver and skeletal muscle.

Its subcellular location is the mitochondrion inner membrane. In terms of biological role, mitochondrial intermembrane chaperone that participates in the import and insertion of multi-pass transmembrane proteins into the mitochondrial inner membrane. May also be required for the transfer of beta-barrel precursors from the TOM complex to the sorting and assembly machinery (SAM complex) of the outer membrane. Acts as a chaperone-like protein that protects the hydrophobic precursors from aggregation and guide them through the mitochondrial intermembrane space. The sequence is that of Mitochondrial import inner membrane translocase subunit Tim9 (TIMM9) from Homo sapiens (Human).